We begin with the raw amino-acid sequence, 58 residues long: uncharacterized protein (58 aa).

The next 2 helical transmembrane spans lie at 7-27 (IFDIVMYIIFGVLSLFLVAKT) and 29-49 (YGTGVLVFVAILYLAVIAYKI).

Its subcellular location is the cell membrane. This is an uncharacterized protein from Bacillus subtilis (strain 168).